Reading from the N-terminus, the 250-residue chain is Dimethyl sulfide dehydrogenase assembly chaperone protein (250 aa).

Positions 231–250 (SAEARSDSAPDAAAHQNLWG) are disordered.

The protein belongs to the type II DMSO reductase enzyme chaperone family.

The protein resides in the cytoplasm. Functionally, may function as a system-specific chaperone protein essential for the assembly of an active dimethyl sulfide dehydrogenase DdhABC. The sequence is that of Dimethyl sulfide dehydrogenase assembly chaperone protein (ddhD) from Rhodovulum sulfidophilum (Rhodobacter sulfidophilus).